Consider the following 805-residue polypeptide: Leucine--tRNA ligase (805 aa).

The 'HIGH' region signature appears at proline 40–histidine 51. Residues lysine 576–serine 580 carry the 'KMSKS' region motif. Residue lysine 579 participates in ATP binding.

The protein belongs to the class-I aminoacyl-tRNA synthetase family.

The protein resides in the cytoplasm. It catalyses the reaction tRNA(Leu) + L-leucine + ATP = L-leucyl-tRNA(Leu) + AMP + diphosphate. The sequence is that of Leucine--tRNA ligase from Brevibacillus brevis (strain 47 / JCM 6285 / NBRC 100599).